We begin with the raw amino-acid sequence, 264 residues long: Ribonuclease HII (264 aa).

Residues 33–224 (GPVAGVDEVG…VRRVASGSNT (192 aa)) enclose the RNase H type-2 domain. Residues Asp-39, Glu-40, and Asp-133 each contribute to the a divalent metal cation site. The disordered stretch occupies residues 222 to 264 (SNTAEVADGQPDPRDGTAQTGEGRWSKSSHPATMRATGRAQGT).

The protein belongs to the RNase HII family. The cofactor is Mn(2+). Mg(2+) serves as cofactor.

The protein resides in the cytoplasm. It catalyses the reaction Endonucleolytic cleavage to 5'-phosphomonoester.. Its function is as follows. Endonuclease that specifically degrades the RNA of RNA-DNA hybrids. The protein is Ribonuclease HII of Mycobacterium bovis (strain BCG / Pasteur 1173P2).